A 97-amino-acid polypeptide reads, in one-letter code: Citrate lyase acyl carrier protein (97 aa).

Serine 14 carries the O-(phosphoribosyl dephospho-coenzyme A)serine modification.

The protein belongs to the CitD family. In terms of assembly, oligomer with a subunit composition of (alpha,beta,gamma)6.

The protein localises to the cytoplasm. Its function is as follows. Covalent carrier of the coenzyme of citrate lyase. The protein is Citrate lyase acyl carrier protein of Lactobacillus helveticus (strain DPC 4571).